Reading from the N-terminus, the 258-residue chain is Deoxyribose-phosphate aldolase (258 aa).

Catalysis depends on Asp102, which acts as the Proton donor/acceptor. Catalysis depends on Lys165, which acts as the Schiff-base intermediate with acetaldehyde. Lys199 (proton donor/acceptor) is an active-site residue.

Belongs to the DeoC/FbaB aldolase family. DeoC type 2 subfamily.

Its subcellular location is the cytoplasm. It carries out the reaction 2-deoxy-D-ribose 5-phosphate = D-glyceraldehyde 3-phosphate + acetaldehyde. Its pathway is carbohydrate degradation; 2-deoxy-D-ribose 1-phosphate degradation; D-glyceraldehyde 3-phosphate and acetaldehyde from 2-deoxy-alpha-D-ribose 1-phosphate: step 2/2. In terms of biological role, catalyzes a reversible aldol reaction between acetaldehyde and D-glyceraldehyde 3-phosphate to generate 2-deoxy-D-ribose 5-phosphate. This Vibrio parahaemolyticus serotype O3:K6 (strain RIMD 2210633) protein is Deoxyribose-phosphate aldolase.